Here is a 152-residue protein sequence, read N- to C-terminus: Deoxyuridine 5'-triphosphate nucleotidohydrolase (152 aa).

Substrate contacts are provided by residues Arg-72–Gly-74, Asn-85, and Thr-89–Asp-91.

The protein belongs to the dUTPase family. Mg(2+) serves as cofactor.

The enzyme catalyses dUTP + H2O = dUMP + diphosphate + H(+). It participates in pyrimidine metabolism; dUMP biosynthesis; dUMP from dCTP (dUTP route): step 2/2. Its function is as follows. This enzyme is involved in nucleotide metabolism: it produces dUMP, the immediate precursor of thymidine nucleotides and it decreases the intracellular concentration of dUTP so that uracil cannot be incorporated into DNA. The polypeptide is Deoxyuridine 5'-triphosphate nucleotidohydrolase (Afipia carboxidovorans (strain ATCC 49405 / DSM 1227 / KCTC 32145 / OM5) (Oligotropha carboxidovorans)).